We begin with the raw amino-acid sequence, 210 residues long: Large ribosomal subunit protein bL25 (210 aa).

A disordered region spans residues 186 to 210 (ISSASTEKEAESNQESTSTTPSSES). The span at 198–210 (NQESTSTTPSSES) shows a compositional bias: low complexity.

The protein belongs to the bacterial ribosomal protein bL25 family. CTC subfamily. Part of the 50S ribosomal subunit; part of the 5S rRNA/L5/L18/L25 subcomplex. Contacts the 5S rRNA. Binds to the 5S rRNA independently of L5 and L18.

In terms of biological role, this is one of the proteins that binds to the 5S RNA in the ribosome where it forms part of the central protuberance. The protein is Large ribosomal subunit protein bL25 of Ehrlichia chaffeensis (strain ATCC CRL-10679 / Arkansas).